Reading from the N-terminus, the 110-residue chain is Ribonuclease P protein component 4 (110 aa).

Residues Cys-65, Cys-68, Cys-94, and Cys-97 each coordinate Zn(2+).

This sequence belongs to the eukaryotic/archaeal RNase P protein component 4 family. In terms of assembly, consists of a catalytic RNA component and at least 4-5 protein subunits. Requires Zn(2+) as cofactor.

The protein localises to the cytoplasm. The enzyme catalyses Endonucleolytic cleavage of RNA, removing 5'-extranucleotides from tRNA precursor.. In terms of biological role, part of ribonuclease P, a protein complex that generates mature tRNA molecules by cleaving their 5'-ends. The polypeptide is Ribonuclease P protein component 4 (Methanococcus maripaludis (strain C6 / ATCC BAA-1332)).